A 686-amino-acid chain; its full sequence is Amyloid-beta-like protein (686 aa).

An N-terminal signal peptide occupies residues 1–21; it reads MTVGKLMIGLLIPILVATVYA. Topologically, residues 22–621 are extracellular; the sequence is EGSPAGSKRH…VERSASSVFQ (600 aa). The GFLD subdomain stretch occupies residues 32–125; that stretch reads EKFIPMVAFS…PYHCIDGEFH (94 aa). An E1 domain is found at 32–197; that stretch reads EKFIPMVAFS…TGVEFVCCPN (166 aa). Disulfide bonds link cysteine 42–cysteine 65, cysteine 76–cysteine 119, cysteine 101–cysteine 108, cysteine 135–cysteine 195, cysteine 146–cysteine 182, and cysteine 160–cysteine 194. Asparagine 84 is a glycosylation site (N-linked (GlcNAc...) asparagine). The cuBD subdomain stretch occupies residues 133 to 197; sequence HDCQFSHVNS…TGVEFVCCPN (65 aa). Asparagine 201 carries N-linked (GlcNAc...) asparagine glycosylation. Positions 201–245 are disordered; sequence NKTDVQKTKEDEDDDDDEDDAYEDDYSEESDEKDEEEPSSQDPYF. Over residues 211–239 the composition is skewed to acidic residues; that stretch reads DEDDDDDEDDAYEDDYSEESDEKDEEEPS. One can recognise an E2 domain in the interval 240-440; that stretch reads SQDPYFKIAN…KYVRPIAVTY (201 aa). A glycan (N-linked (GlcNAc...) asparagine) is linked at asparagine 249. Heparin contacts are provided by residues 252–255 and histidine 382; that span reads NEHD. N-linked (GlcNAc...) asparagine glycosylation is present at asparagine 417. Disordered stretches follow at residues 479–526 and 550–585; these read PTTT…DMKK and KLVETSVQTDDEDDDEDSSSSTSSESDEDEDKNIKE. Residues 500 to 516 show a composition bias toward acidic residues; it reads SDSEEEADEYYEDEDDE. Residues 517–526 show a composition bias toward basic and acidic residues; the sequence is QVKKTPDMKK. Over residues 558-567 the composition is skewed to acidic residues; that stretch reads TDDEDDDEDS. A helical membrane pass occupies residues 622 to 642; that stretch reads PYVLASAMFITAICIIAFAIT. Topologically, residues 643–686 are cytoplasmic; that stretch reads NARRRRAMRGFIEVDVYTPEERHVAGMQVNGYENPTYSFFDSKA. The short motif at 674 to 679 is the YENPXY motif element; sequence YENPTY.

Belongs to the APP family. As to quaternary structure, interacts (via cytoplasmic domain) with feh-1 (via PID 2 domain). Extracellular region is proteolytically cleaved. In terms of tissue distribution, expressed in the head, pharynx, spermatheca, uterus, vulva, tail and ventral neurons. Specifically expressed in nerve ring interneurons, the ventral cord, socket and amphids in the head, with strong expression in junctional cells, including the pharyngeal intestinal valve and uterine seam junction, and the excretory cell and weak expression in epidermal epithelial cells, including hyp7 cells, vulval cells, rectal valve cells, pharyngeal arcade cells and the tail hypodermis.

The protein localises to the membrane. It is found in the early endosome. In terms of biological role, required for normal developmental progression throughout all life stages. Specifically required for the molt stage during all larval transitions and morphogenesis. Acts with heterochronic genes, including members of the let-7 family, to regulate larval stage to adult transition. Acts synergistically with acn-1 in let-7 regulated postembryonic cell division of hypodermal seam cells. Acts in multiple pathways to influence daf-12 and daf-16 activity to in turn regulate physiological and reproductive processes such as body size and egg-laying. May play a role in neurotransmission. This is Amyloid-beta-like protein from Caenorhabditis elegans.